Consider the following 84-residue polypeptide: Small ribosomal subunit protein uS17 (84 aa).

Belongs to the universal ribosomal protein uS17 family. In terms of assembly, part of the 30S ribosomal subunit.

In terms of biological role, one of the primary rRNA binding proteins, it binds specifically to the 5'-end of 16S ribosomal RNA. In Vibrio atlanticus (strain LGP32) (Vibrio splendidus (strain Mel32)), this protein is Small ribosomal subunit protein uS17.